The primary structure comprises 196 residues: Mitochondrial intermembrane space cysteine motif-containing protein MIX23 (196 aa).

Positions 99-114 (CEKEAAEMKNETDQQC) match the Cx14C motif motif. Positions 178–192 (CEQNNDYLKEFTQFC) match the Cx13C motif motif.

This sequence belongs to the MIX23 family.

Its subcellular location is the mitochondrion intermembrane space. In terms of biological role, regulator of the mitochondrial protein import machinery that is localized in the mitochondrial intermembrane space (IMS) and facilitates the transport of proteins from the cytosol into the mitochondrial matrix. Not essential for mitochondrial protein import but induced and required when mitochondrial import is compromised. Stimulates or stabilizes the translocation into the mitochondria of proteins such as OXA1, ATP1 and COX12. In Saccharomyces cerevisiae (strain ATCC 204508 / S288c) (Baker's yeast), this protein is Mitochondrial intermembrane space cysteine motif-containing protein MIX23.